We begin with the raw amino-acid sequence, 500 residues long: Glutathione gamma-glutamylcysteinyltransferase 1 (500 aa).

The Peptidase C83 domain occupies 1-221; it reads MEVASLYRRV…GFMLVSRRSS (221 aa). Active-site residues include Cys56, His162, and Asp180.

This sequence belongs to the phytochelatin synthase family. As to expression, expressed in roots and shoots.

It carries out the reaction [Glu(-Cys)](n)-Gly + glutathione + H(+) = [Glu(-Cys)](n+1)-Gly + glycine. With respect to regulation, requires cadmium for activity. Functionally, involved in the synthesis of phytochelatins (PC) and homophytochelatins (hPC), the heavy-metal-binding peptides of plants. The sequence is that of Glutathione gamma-glutamylcysteinyltransferase 1 (PCS1) from Triticum aestivum (Wheat).